Consider the following 397-residue polypeptide: HTH-type transcriptional regulator GalR (397 aa).

HTH lysR-type domains lie at 7–64 (PNLM…MRLT) and 99–156 (FQAR…LQPT). 2 DNA-binding regions (H-T-H motif) span residues 24-43 (VSRA…RAIA) and 116-135 (MQTV…AALK).

The protein belongs to the LysR transcriptional regulatory family.

In terms of biological role, transcriptional regulator for the galBCD and galTAP operons, encoding genes of the gallate degradation pathway. This is HTH-type transcriptional regulator GalR (galR) from Pseudomonas putida (strain ATCC 47054 / DSM 6125 / CFBP 8728 / NCIMB 11950 / KT2440).